Here is a 535-residue protein sequence, read N- to C-terminus: EH domain-containing protein 3 (535 aa).

Met1 bears the N-acetylmethionine mark. One can recognise a Dynamin-type G domain in the interval 55–286; that stretch reads FDNKPMVLLV…DLFRDIQSLP (232 aa). A G1 motif region spans residues 65–72; sequence GQYSTGKT. Residue 65-72 participates in ATP binding; sequence GQYSTGKT. A G2 motif region spans residues 91-92; sequence EP. A G3 motif region spans residues 153 to 156; that stretch reads DTPG. The stretch at 198–227 forms a coiled coil; sequence DEFSEVIKALKNHEDKMRVVLNKADQIETQ. A G4 motif region spans residues 219 to 222; sequence NKAD. Lys220 lines the ATP pocket. Position 243 (Ile243) is a region of interest, G5 motif. Residue Trp258 participates in ATP binding. A Glycyl lysine isopeptide (Lys-Gly) (interchain with G-Cter in SUMO) cross-link involves residue Lys315. Residues Ser349 and Ser456 each carry the phosphoserine modification. The region spanning 444-532 is the EH domain; it reads DKPMYDEIFY…AHLLPPSKRK (89 aa). Positions 476–511 constitute an EF-hand domain; sequence LPNSVLGKIWKLADIDKDGMLDDEEFALANHLIKVK. Residues Asp489, Asp491, Asp493, Met495, and Glu500 each coordinate Ca(2+). Lys511 participates in a covalent cross-link: Glycyl lysine isopeptide (Lys-Gly) (interchain with G-Cter in SUMO).

This sequence belongs to the TRAFAC class dynamin-like GTPase superfamily. Dynamin/Fzo/YdjA family. EHD subfamily. Homooligomer. Heterooligomer with EHD1. Heterooligomer with EHD2 and EHD4; ATP-binding is required for heterooligomerization. Interacts with PACSIN1. Interacts with PACSIN2. Interacts (via EH domain) with MICALL1. Interacts (via EH domain) with RAB11FIP2. Interacts with ANK2. Interacts with CACNA1GG and CACNA1H. As to expression, strong expression seen in the kidney, brain and liver. In the kidney, expressed exclusively by glomerular endothelial cells; at protein level. Expressed in skeletal muscle neuromuscular junction perisynaptic region; at protein level.

It localises to the recycling endosome membrane. The protein resides in the cell membrane. Its subcellular location is the cell projection. The protein localises to the cilium membrane. It is found in the cytoplasmic vesicle. Functionally, ATP- and membrane-binding protein that controls membrane reorganization/tubulation upon ATP hydrolysis. In vitro causes tubulation of endocytic membranes. Binding to phosphatidic acid induces its membrane tubulation activity. Plays a role in endocytic transport. Involved in early endosome to recycling endosome compartment (ERC), retrograde early endosome to Golgi, and endosome to plasma membrane (rapid recycling) protein transport. Involved in the regulation of Golgi maintenance and morphology. Involved in the recycling of internalized D1 dopamine receptor. Plays a role in cardiac protein trafficking probably implicating ANK2. Involved in the ventricular membrane targeting of SLC8A1 and CACNA1C and probably the atrial membrane localization of CACNA1GG and CACNA1H implicated in the regulation of atrial myocyte excitability and cardiac conduction. In conjunction with EHD4 may be involved in endocytic trafficking of KDR/VEGFR2 implicated in control of glomerular function. Involved in the rapid recycling of integrin beta-3 implicated in cell adhesion maintenance. Involved in the unidirectional retrograde dendritic transport of endocytosed BACE1 and in efficient sorting of BACE1 to axons implicating a function in neuronal APP processing. Plays a role in the formation of the ciliary vesicle, an early step in cilium biogenesis; possibly sharing redundant functions with Ehd1. This Mus musculus (Mouse) protein is EH domain-containing protein 3.